Here is a 210-residue protein sequence, read N- to C-terminus: Large ribosomal subunit protein uL3 (210 aa).

The tract at residues 119-143 (GYQGNIKKDGQSRGPMAHGSRYHRR) is disordered.

This sequence belongs to the universal ribosomal protein uL3 family. As to quaternary structure, part of the 50S ribosomal subunit. Forms a cluster with proteins L14 and L19.

Its function is as follows. One of the primary rRNA binding proteins, it binds directly near the 3'-end of the 23S rRNA, where it nucleates assembly of the 50S subunit. The chain is Large ribosomal subunit protein uL3 from Lacticaseibacillus casei (strain BL23) (Lactobacillus casei).